Reading from the N-terminus, the 258-residue chain is Ribosomal RNA small subunit methyltransferase J (258 aa).

S-adenosyl-L-methionine is bound by residues 106 to 107, 122 to 123, and aspartate 181; these read RD and ER.

It belongs to the methyltransferase superfamily. RsmJ family.

It is found in the cytoplasm. It carries out the reaction guanosine(1516) in 16S rRNA + S-adenosyl-L-methionine = N(2)-methylguanosine(1516) in 16S rRNA + S-adenosyl-L-homocysteine + H(+). Specifically methylates the guanosine in position 1516 of 16S rRNA. The chain is Ribosomal RNA small subunit methyltransferase J from Pseudoalteromonas atlantica (strain T6c / ATCC BAA-1087).